A 201-amino-acid polypeptide reads, in one-letter code: B-cell CLL/lymphoma 7 protein family member B-B (201 aa).

The tract at residues 104–201 (QSNTKVDSSS…VCTEHNSTVS (98 aa)) is disordered.

The protein belongs to the BCL7 family.

In Danio rerio (Zebrafish), this protein is B-cell CLL/lymphoma 7 protein family member B-B.